Reading from the N-terminus, the 185-residue chain is MINVNEFRPGITFEFENEIYVVISAQHSKQGRGQANVKAKVKNLRTGAITIKTFSGGERVEKAHIEKISMSFLYNDGVSIVLMDDSTYEQVAIENTKITWELNFLTEGIKVKLRKFNNEILDIELPAKIELKITSTFDAVRGNTTTNPTKRATLETGYEIDVPLFIKEGESVIVSTEDGKYVSRA.

The protein belongs to the elongation factor P family.

Its subcellular location is the cytoplasm. Its pathway is protein biosynthesis; polypeptide chain elongation. In terms of biological role, involved in peptide bond synthesis. Stimulates efficient translation and peptide-bond synthesis on native or reconstituted 70S ribosomes in vitro. Probably functions indirectly by altering the affinity of the ribosome for aminoacyl-tRNA, thus increasing their reactivity as acceptors for peptidyl transferase. This is Elongation factor P from Mesomycoplasma hyopneumoniae (strain 232) (Mycoplasma hyopneumoniae).